The primary structure comprises 571 residues: Hemagglutinin-neuraminidase (571 aa).

Residues 1-26 (MDRAVGRVALENEEREAKNTWRFVFR) lie on the Intravirion side of the membrane. Residues 27-47 (IAIFLLIVITLAISAAALVYS) traverse the membrane as a helical segment. The Virion surface segment spans residues 48–571 (MEASTPGDLV…LVEILKEDGV (524 aa)). N-linked (GlcNAc...) asparagine; by host glycosylation is present at N119. Residues 124 to 152 (GAPVHDPDYIGGIGKELIVDDASDVTSFY) are important for interaction with fusion/F protein. Cystine bridges form between C172–C196, C186–C247, and C238–C251. Positions 234 to 239 (NRKSCS) are involved in neuraminidase activity. Residues N341 and N433 are each glycosylated (N-linked (GlcNAc...) asparagine; by host). 2 cysteine pairs are disulfide-bonded: C344-C461 and C455-C465. 3 N-linked (GlcNAc...) asparagine; by host glycosylation sites follow: N481, N508, and N538. Cysteines 531 and 542 form a disulfide.

It belongs to the paramyxoviruses hemagglutinin-neuraminidase family. In terms of assembly, homotetramer; composed of disulfide-linked homodimers. Interacts with F protein trimer. Interacts with host CG-1B; this interaction inhibits viral adsorption and replication rather than internalization.

The protein localises to the virion membrane. It localises to the host cell membrane. It carries out the reaction Hydrolysis of alpha-(2-&gt;3)-, alpha-(2-&gt;6)-, alpha-(2-&gt;8)- glycosidic linkages of terminal sialic acid residues in oligosaccharides, glycoproteins, glycolipids, colominic acid and synthetic substrates.. Its function is as follows. Mediates the viral entry into the host cell together with fusion/F protein. Attaches the virus to sialic acid-containing cell receptors and thereby initiates infection. Binding of HN protein to the receptor induces a conformational change that allows the F protein to trigger virion/cell membranes fusion. Neuraminidase activity ensures the efficient spread of the virus by dissociating the mature virions from the neuraminic acid containing glycoproteins. The sequence is that of Hemagglutinin-neuraminidase (HN) from Gallus gallus (Chicken).